Consider the following 846-residue polypeptide: Penicillin G acylase (846 aa).

An N-terminal signal peptide occupies residues 1–26; that stretch reads MKNRNRMIVNCVTASLMYYWSLPALA. E178 provides a ligand contact to Ca(2+). The propeptide at 236-289 is spacer peptide; the sequence is ALLPRYDLPAPMLDRPAKGADGALLALTAGKNRETIAAQFAQGGANGLAGYPTT. S290 serves as the catalytic Nucleophile. Residues D362, V364, D365, P494, and D541 each coordinate Ca(2+).

This sequence belongs to the peptidase S45 family. In terms of assembly, heterodimer of an alpha subunit and a beta subunit processed from the same precursor. Ca(2+) serves as cofactor.

The protein resides in the periplasm. It catalyses the reaction a penicillin + H2O = 6-aminopenicillanate + a carboxylate. This chain is Penicillin G acylase (pac), found in Escherichia coli.